Reading from the N-terminus, the 330-residue chain is Beta-ketoacyl-[acyl-carrier-protein] synthase III (330 aa).

Residues cysteine 118 and histidine 257 contribute to the active site. The ACP-binding stretch occupies residues 258–262 (QANLR). Asparagine 287 is a catalytic residue.

The protein belongs to the thiolase-like superfamily. FabH family. In terms of assembly, homodimer.

It localises to the cytoplasm. It carries out the reaction malonyl-[ACP] + acetyl-CoA + H(+) = 3-oxobutanoyl-[ACP] + CO2 + CoA. The protein operates within lipid metabolism; fatty acid biosynthesis. Its function is as follows. Catalyzes the condensation reaction of fatty acid synthesis by the addition to an acyl acceptor of two carbons from malonyl-ACP. Catalyzes the first condensation reaction which initiates fatty acid synthesis and may therefore play a role in governing the total rate of fatty acid production. Possesses both acetoacetyl-ACP synthase and acetyl transacylase activities. Its substrate specificity determines the biosynthesis of branched-chain and/or straight-chain of fatty acids. The chain is Beta-ketoacyl-[acyl-carrier-protein] synthase III from Nitratidesulfovibrio vulgaris (strain DSM 19637 / Miyazaki F) (Desulfovibrio vulgaris).